A 48-amino-acid polypeptide reads, in one-letter code: Delta-stichotoxin-Hmg4a (48 aa).

Intrachain disulfides connect Cys3-Cys43, Cys5-Cys33, and Cys26-Cys44.

The protein belongs to the sea anemone sodium channel inhibitory toxin family. Type II subfamily.

It is found in the secreted. It localises to the nematocyst. Functionally, binds specifically to voltage-gated sodium channels (Nav), thereby delaying their inactivation during signal transduction. Its toxicity is weaker than that of RpIII (AC P08380). The chain is Delta-stichotoxin-Hmg4a from Heteractis magnifica (Magnificent sea anemone).